The following is a 410-amino-acid chain: Ribulose bisphosphate carboxylase large chain (410 aa).

Residues Asn-100 and Thr-150 each coordinate substrate. The active-site Proton acceptor is Lys-152. Lys-154 lines the substrate pocket. Mg(2+) contacts are provided by Lys-178, Asp-180, and Glu-181. Residue Lys-178 is modified to N6-carboxylysine. His-271 (proton acceptor) is an active-site residue. Positions 272, 304, and 356 each coordinate substrate.

Belongs to the RuBisCO large chain family. Type I subfamily. As to quaternary structure, heterohexadecamer of 8 large chains and 8 small chains; disulfide-linked. The disulfide link is formed within the large subunit homodimers. Mg(2+) is required as a cofactor. Post-translationally, the disulfide bond which can form in the large chain dimeric partners within the hexadecamer appears to be associated with oxidative stress and protein turnover.

Its subcellular location is the plastid. It is found in the chloroplast. The catalysed reaction is 2 (2R)-3-phosphoglycerate + 2 H(+) = D-ribulose 1,5-bisphosphate + CO2 + H2O. It catalyses the reaction D-ribulose 1,5-bisphosphate + O2 = 2-phosphoglycolate + (2R)-3-phosphoglycerate + 2 H(+). In terms of biological role, ruBisCO catalyzes two reactions: the carboxylation of D-ribulose 1,5-bisphosphate, the primary event in carbon dioxide fixation, as well as the oxidative fragmentation of the pentose substrate in the photorespiration process. Both reactions occur simultaneously and in competition at the same active site. The protein is Ribulose bisphosphate carboxylase large chain (rbcL) of Gleichenia japonica (Urajiro).